The primary structure comprises 475 residues: MDAYNNPSAVESGDAAVKSVDDDGREKRTGTFWTASAHIITAVIGSGVLSLAWAIAQLGWVAGTTVLVAFAIITYYTSTLLADCYRSPDSITGTRNYNYMGVVRSYLGGKKVQLCGVAQYVNLVGVTIGYTITASISLVAIGKSNCYHDKGHKAKCSVSNYPYMAAFGIVQIILSQLPNFHKLSFLSIIAAVMSFSYASIGIGLAIATVASGKIGKTELTGTVIGVDVTASEKVWKLFQAIGDIAFSYAFTTILIEIQDTLRSSPPENKVMKRASLVGVSTTTVFYILCGCIGYAAFGNQAPGDFLTDFGFYEPYWLIDFANACIALHLIGAYQVYAQPFFQFVEENCNKKWPQSNFINKEYSSKVPLLGKCRVNLFRLVWRTCYVVLTTFVAMIFPFFNAILGLLGAFAFWPLTVYFPVAMHIAQAKVKKYSRRWLALNLLVLVCLIVSALAAVGSIIGLINSVKSYKPFKNLD.

The interval 1–22 is disordered; it reads MDAYNNPSAVESGDAAVKSVDD. Topologically, residues 1–31 are cytoplasmic; that stretch reads MDAYNNPSAVESGDAAVKSVDDDGREKRTGT. Helical transmembrane passes span 32–52 and 53–73; these read FWTA…LSLA and WAIA…FAII. Residues 74 to 120 lie on the Cytoplasmic side of the membrane; it reads TYYTSTLLADCYRSPDSITGTRNYNYMGVVRSYLGGKKVQLCGVAQY. Residues 121 to 141 form a helical membrane-spanning segment; that stretch reads VNLVGVTIGYTITASISLVAI. The Extracellular portion of the chain corresponds to 142–157; sequence GKSNCYHDKGHKAKCS. The helical transmembrane segment at 158–178 threads the bilayer; the sequence is VSNYPYMAAFGIVQIILSQLP. Residues 179–185 are Cytoplasmic-facing; it reads NFHKLSF. A helical transmembrane segment spans residues 186–206; it reads LSIIAAVMSFSYASIGIGLAI. Residues 207–236 lie on the Extracellular side of the membrane; the sequence is ATVASGKIGKTELTGTVIGVDVTASEKVWK. Residues 237 to 257 form a helical membrane-spanning segment; the sequence is LFQAIGDIAFSYAFTTILIEI. Residues 258 to 276 are Cytoplasmic-facing; sequence QDTLRSSPPENKVMKRASL. Residues 277–297 traverse the membrane as a helical segment; the sequence is VGVSTTTVFYILCGCIGYAAF. The Extracellular portion of the chain corresponds to 298–314; that stretch reads GNQAPGDFLTDFGFYEP. The chain crosses the membrane as a helical span at residues 315–335; the sequence is YWLIDFANACIALHLIGAYQV. Topologically, residues 336-378 are cytoplasmic; sequence YAQPFFQFVEENCNKKWPQSNFINKEYSSKVPLLGKCRVNLFR. The chain crosses the membrane as a helical span at residues 379 to 398; sequence LVWRTCYVVLTTFVAMIFPF. The Extracellular segment spans residues 399–401; it reads FNA. The chain crosses the membrane as a helical span at residues 402–424; sequence ILGLLGAFAFWPLTVYFPVAMHI. Residues 425–441 lie on the Cytoplasmic side of the membrane; it reads AQAKVKKYSRRWLALNL. Residues 442-462 form a helical membrane-spanning segment; sequence LVLVCLIVSALAAVGSIIGLI. Topologically, residues 463–475 are extracellular; that stretch reads NSVKSYKPFKNLD.

This sequence belongs to the amino acid/polyamine transporter 2 family. Amino acid/auxin permease (AAAP) (TC 2.A.18.2) subfamily. Expressed in flower buds, siliques, developing seeds and funiculi.

The protein localises to the cell membrane. Functionally, amino acid-proton symporter. Stereospecific transporter with a broad specificity for glutamate, aspartate and neutral and acidic amino acids. This is Amino acid permease 8 (AAP8) from Arabidopsis thaliana (Mouse-ear cress).